A 1170-amino-acid chain; its full sequence is Thrombospondin-1 (1170 aa).

The N-terminal stretch at 1–18 (MGLAWGLGVLFLMHVCGT) is a signal peptide. The tract at residues 47 to 95 (RLVKGPDPSSPAFRIEDANLIPPVPDDKFQDLVDAVRAEKGFLLLASLR) is heparin-binding. Positions 65 to 270 (NLIPPVPDDK…HKTKDLQAIC (206 aa)) constitute a Laminin G-like domain. C171 and C232 are disulfide-bonded. Residues N248 and N360 are each glycosylated (N-linked (GlcNAc...) asparagine). In terms of domain architecture, VWFC spans 316-373 (PLCYHNGVQYRNNEEWTVDSCTECHCQNSVTICKKVSCPIMPCSNATVPDGECCPRCW). TSP type-1 domains lie at 379-429 (DDGW…QECD), 435-490 (DGGW…DACP), and 492-547 (NGGW…QDCP). Residue W385 is glycosylated (C-linked (Man) tryptophan). 3 cysteine pairs are disulfide-bonded: C391–C423, C395–C428, and C406–C413. A glycan (O-linked (Fuc...) serine) is linked at S394. Residues W438 and W441 are each glycosylated (C-linked (Man) tryptophan). 3 cysteine pairs are disulfide-bonded: C447–C484, C451–C489, and C462–C474. T450 is a glycosylation site (O-linked (Fuc...) threonine). A glycan (C-linked (Man) tryptophan) is linked at W498. 21 cysteine pairs are disulfide-bonded: C504–C541, C508–C546, C519–C531, C551–C562, C556–C572, C575–C586, C592–C608, C599–C617, C620–C644, C650–C663, C657–C676, C678–C689, C705–C713, C718–C738, C754–C774, C777–C797, C813–C833, C836–C856, C874–C894, C910–C930, and C946–C1167. T507 is a glycosylation site (O-linked (Fuc...) threonine). The involved in retention in extracellular matrix (ECM); involved in trimer formation stretch occupies residues 531–1152 (CVGDVTENQI…YAGGRLGLFV (622 aa)). The region spanning 547-587 (PIDGCLSNPCFAGVKCTSYPDGSWKCGACPPGYSGNGIQCT) is the EGF-like 1 domain. S553 carries an O-linked (Xyl) serine glycan. The region spanning 646 to 690 (PRNPCTDGTHDCNKNAKCNYLGHYSDPMYRCECKPGYAGNGIICG) is the EGF-like 2 domain. TSP type-3 repeat units lie at residues 691–726 (EDTD…NSGQ), 727–762 (EDYD…NPAQ), 763–785 (YDYD…NPDQ), 786–821 (ADTD…NVDQ), 822–844 (RDTD…NPDQ), 845–882 (LDSD…NANQ), 883–918 (ADHD…NPDQ), and 919–954 (KDSD…DISE). Residue N708 is glycosylated (N-linked (GlcNAc...) asparagine). The disordered stretch occupies residues 839–934 (EHNPDQLDSD…GRGDACKDDF (96 aa)). Basic and acidic residues-rich tracts occupy residues 840-854 (HNPD…RIGD), 883-894 (ADHDKDGKGDAC), and 917-934 (DQKD…KDDF). Positions 926–928 (RGD) match the Cell attachment site motif. Residues 958 to 1170 (RRFQMIPLDP…SDLKYECRDP (213 aa)) enclose the TSP C-terminal domain. N-linked (GlcNAc...) asparagine glycosylation occurs at N1067.

Belongs to the thrombospondin family. In terms of assembly, homotrimer; disulfide-linked. Can bind to fibrinogen, fibronectin, laminin, type V collagen and integrins alpha-V/beta-1, alpha-V/beta-3 and alpha-IIb/beta-3. Binds heparin. Interacts (via the C-terminal domain) with CD47. Interacts (via the TSP type I repeats) with CD36; the interaction conveys an antiangiogenic effect. Interacts (via the TSP type I repeats) with HRG; the interaction blocks the antiangiogenic effect of THBS1 with CD36. Interacts with ATF6 (via lumenal domain). Interacts with FN1; this interaction is enhanced by TNFAIP6, which may act as a bridging molecule between FN1 and THBS1. Interacts with SIRPA; the interaction stimulates phosphorylation of SIRPA. In terms of tissue distribution, expressed by platelets (at protein level). Expressed by monocyte-derived immature and mature dendritic cells (at protein level).

The protein localises to the secreted. The protein resides in the cell surface. It is found in the extracellular space. It localises to the extracellular matrix. Its subcellular location is the endoplasmic reticulum. The protein localises to the sarcoplasmic reticulum. Its function is as follows. Adhesive glycoprotein that mediates cell-to-cell and cell-to-matrix interactions. Multifunctional, involved in inflammation, angiogenesis, wound healing, reactive oxygen species (ROS) signaling, nitrous oxide (NO) signaling, apoptosis, senescence, aging, cellular self-renewal, stemness, and cardiovascular and metabolic homeostasis. Negatively modulates dendritic cell activation and cytokine release, as part of an autocrine feedback loop, contributing to the resolution of inflammation and immune homeostasis. Ligand for receptor CD47. Modulates nitrous oxide (NO) signaling via CD47, hence playing a role as a pressor agent, supporting blood pressure. Plays a role in endothelial cell senescence, acting via CD47, by increasing the abundance and activation of NADPH oxidase NOX1, and so generating excess ROS. Inhibits stem cell self-renewal, acting via CD47 signaling, probably by regulation of the stem cell transcription factors POU5F1/OCT4, SOX2, MYC/c-Myc and KLF4. Negatively modulates wound healing, acting via CD47. Ligand for receptor CD36. Involved in inducing apoptosis in podocytes in response to elevated free fatty acids, acting via CD36. Plays a role in suppressing angiogenesis, acting, depending on context, via CD36 or CD47. Promotes cellular senescence in a TP53-CDKN1A-RB1 signaling-dependent manner. Ligand for immunoglobulin-like cell surface receptor SIRPA. Involved in ROS signaling in non-phagocytic cells, stimulating NADPH oxidase-derived ROS production, acting via interaction with SIRPA. Plays a role in metabolic dysfunction in diet-induced obesity, perhaps acting by exacerbating adipose inflammatory activity; its effects may be mediated, at least in part, through enhanced adipocyte proliferation. Plays a role in ER stress response, via its interaction with the activating transcription factor 6 alpha (ATF6) which produces adaptive ER stress response factors. May be involved in age-related conditions, including metabolic dysregulation, during normal aging. The protein is Thrombospondin-1 of Homo sapiens (Human).